Consider the following 194-residue polypeptide: Peptidyl-tRNA hydrolase (194 aa).

Y17 contributes to the tRNA binding site. H22 serves as the catalytic Proton acceptor. 3 residues coordinate tRNA: Y68, N70, and N116.

It belongs to the PTH family. In terms of assembly, monomer.

The protein localises to the cytoplasm. It carries out the reaction an N-acyl-L-alpha-aminoacyl-tRNA + H2O = an N-acyl-L-amino acid + a tRNA + H(+). Its function is as follows. Hydrolyzes ribosome-free peptidyl-tRNAs (with 1 or more amino acids incorporated), which drop off the ribosome during protein synthesis, or as a result of ribosome stalling. Catalyzes the release of premature peptidyl moieties from peptidyl-tRNA molecules trapped in stalled 50S ribosomal subunits, and thus maintains levels of free tRNAs and 50S ribosomes. This Pseudomonas syringae pv. tomato (strain ATCC BAA-871 / DC3000) protein is Peptidyl-tRNA hydrolase.